The chain runs to 682 residues: Heat shock 70 kDa protein 10, mitochondrial (682 aa).

The N-terminal 50 residues, 1-50, are a transit peptide targeting the mitochondrion; sequence MATAALLRSIRRREVVSSPFSAYRCLSSSGKASLNSSYLGQNFRSFSRAF. The interval 646-682 is disordered; the sequence is KIGEHMSGGSGGGSAPGGGSEGGSDQAPEAEYEEVKK. Over residues 651 to 667 the composition is skewed to gly residues; it reads MSGGSGGGSAPGGGSEG. Positions 673 to 682 are enriched in acidic residues; sequence PEAEYEEVKK.

The protein belongs to the heat shock protein 70 (TC 1.A.33) family. DnaK subfamily.

The protein localises to the mitochondrion. Chaperone involved in the maturation of iron-sulfur [Fe-S] cluster-containing proteins. Has a low intrinsic ATPase activity which is markedly stimulated by HSCB and ISU1. In cooperation with other chaperones, Hsp70s are key components that facilitate folding of de novo synthesized proteins, assist translocation of precursor proteins into organelles, and are responsible for degradation of damaged protein under stress conditions. The sequence is that of Heat shock 70 kDa protein 10, mitochondrial from Arabidopsis thaliana (Mouse-ear cress).